Here is a 194-residue protein sequence, read N- to C-terminus: Histone H1 (194 aa).

N-acetylalanine; partial is present on Ala-1. A compositionally biased stretch (low complexity) spans 1-14 (AEVAPAPAAAAPAK). 2 disordered regions span residues 1 to 31 (AEVA…GPAV) and 105 to 194 (AKKP…AAKK). Basic residues predominate over residues 15-26 (APKKKAAAKPKK). Residues 27–100 (SGPAVGELAG…GASGSFKLNK (74 aa)) enclose the H15 domain. A compositionally biased stretch (basic residues) spans 116-194 (KAKKVAAKKP…KVKKPAAAKK (79 aa)). Ser-145, Ser-161, and Ser-182 each carry phosphoserine.

The protein belongs to the histone H1/H5 family.

It localises to the nucleus. Its subcellular location is the chromosome. In terms of biological role, histones H1 are necessary for the condensation of nucleosome chains into higher-order structures. The sequence is that of Histone H1 from Salmo trutta (Brown trout).